The primary structure comprises 229 residues: Small ribosomal subunit protein uS3 (229 aa).

One can recognise a KH type-2 domain in the interval 18-87; the sequence is IDEYLAKQYY…NPQITITNVE (70 aa).

Belongs to the universal ribosomal protein uS3 family. Part of the 30S ribosomal subunit.

In terms of biological role, binds the lower part of the 30S subunit head. The chain is Small ribosomal subunit protein uS3 from Saccharolobus solfataricus (strain ATCC 35092 / DSM 1617 / JCM 11322 / P2) (Sulfolobus solfataricus).